An 821-amino-acid polypeptide reads, in one-letter code: Leucine--tRNA ligase (821 aa).

The 'HIGH' region motif lies at 44 to 54 (PYPSGRIHMGH). A 'KMSKS' region motif is present at residues 589 to 593 (KMSKS). Position 592 (lysine 592) interacts with ATP.

Belongs to the class-I aminoacyl-tRNA synthetase family.

The protein resides in the cytoplasm. It catalyses the reaction tRNA(Leu) + L-leucine + ATP = L-leucyl-tRNA(Leu) + AMP + diphosphate. The chain is Leucine--tRNA ligase from Campylobacter curvus (strain 525.92).